Here is a 327-residue protein sequence, read N- to C-terminus: GMP reductase (327 aa).

C176 acts as the Thioimidate intermediate in catalysis. I205–V228 is a binding site for NADP(+).

The protein belongs to the IMPDH/GMPR family. GuaC type 2 subfamily.

The catalysed reaction is IMP + NH4(+) + NADP(+) = GMP + NADPH + 2 H(+). In terms of biological role, catalyzes the irreversible NADPH-dependent deamination of GMP to IMP. It functions in the conversion of nucleobase, nucleoside and nucleotide derivatives of G to A nucleotides, and in maintaining the intracellular balance of A and G nucleotides. The protein is GMP reductase of Streptococcus gordonii (strain Challis / ATCC 35105 / BCRC 15272 / CH1 / DL1 / V288).